We begin with the raw amino-acid sequence, 556 residues long: MSVSSFNRRWAAVILEALTRHGVRHVCIAPGSRSTPLTLAAAENRAFIHHTHFDERGLGHLALGLAKVSKAPVAVIVTSGTAVANLYPALIEAGLTGEKLVLLTADRPPELIDCGANQAIRQPGIFASHPAEALSLPRPTQDIPASWLVSTLDHAMGTLRHGALHINCPFAEPLYGELNDTGVEWQQTLGDWWQSDKPWLRAQTHLQSGQQRDWFHWRQKRGVILAGRMTAAEGKQVAEWAKTLGWPLIGDVLSQTGQPLPCADLWLGNAKAVTELARAQIVIQLGSSLTGKRVLQWQSTCEPEEYWLVDSLEGRLDPAHHRGRRLVSTIGDWLEDHPAEKRQAWATDIPELSRLAWDLTTQQCERFGEAELAHRIRQYLPDQGQLFVGNSLVVRLIDALSKLPAGYPVYSNRGASGIDGLISTAAGVQRASTKPTLAIVGDLSALYDLNALALLRQASAPFVLIVVNNNGGQIFSLLPTPQSERERFYLMPQNVQFEHAAAMFSLKYHRPQSWSELDDAMSTAWRQPGATLIELVVNDSDGAQKLQHLLAQVSHL.

This sequence belongs to the TPP enzyme family. MenD subfamily. Homodimer. It depends on Mg(2+) as a cofactor. Mn(2+) is required as a cofactor. Thiamine diphosphate serves as cofactor.

It carries out the reaction isochorismate + 2-oxoglutarate + H(+) = 5-enolpyruvoyl-6-hydroxy-2-succinyl-cyclohex-3-ene-1-carboxylate + CO2. It participates in quinol/quinone metabolism; 1,4-dihydroxy-2-naphthoate biosynthesis; 1,4-dihydroxy-2-naphthoate from chorismate: step 2/7. It functions in the pathway quinol/quinone metabolism; menaquinone biosynthesis. In terms of biological role, catalyzes the thiamine diphosphate-dependent decarboxylation of 2-oxoglutarate and the subsequent addition of the resulting succinic semialdehyde-thiamine pyrophosphate anion to isochorismate to yield 2-succinyl-5-enolpyruvyl-6-hydroxy-3-cyclohexene-1-carboxylate (SEPHCHC). This chain is 2-succinyl-5-enolpyruvyl-6-hydroxy-3-cyclohexene-1-carboxylate synthase, found in Enterobacter sp. (strain 638).